The following is an 825-amino-acid chain: Probable ATP-dependent RNA helicase DDX20 (825 aa).

The interval 27–50 (PVQAVEPTPASPWTQRTAHDIGGP) is disordered. A Q motif motif is present at residues 63–91 (ADFESLLLSRPVLEGLRAAGFERPSPVQL). Residues Arg-85, Gln-90, 107–114 (AKSGTGKT), and 110–115 (GTGKTC) each bind ATP. Positions 94 to 265 (IPLGRCGLDL…TRYMRDPTFV (172 aa)) constitute a Helicase ATP-binding domain. Ser-188 is modified (phosphoserine). The short motif at 212 to 215 (DEAD) is the DEAD box element. Ser-270 carries the post-translational modification Phosphoserine. In terms of domain architecture, Helicase C-terminal spans 300–449 (HLQELFSKVP…PIPPGLMEEC (150 aa)). 2 stretches are compositionally biased toward polar residues: residues 465–475 (SPTVATQSPKK) and 484–504 (FQSQ…SASA). Disordered regions lie at residues 465-573 (SPTV…PGSL) and 642-753 (QMLV…EPQE). Phosphoserine is present on residues Ser-472, Ser-501, and Ser-506. Residues 508 to 518 (RPKHSKPKLPV) show a composition bias toward basic residues. Positions 547-571 (KNSVQTSVEDSSSNSQHQAKDSSPG) are enriched in polar residues. A Phosphothreonine modification is found at Thr-552. Residues Ser-561, Ser-653, Ser-655, Ser-657, Ser-673, Ser-678, and Ser-679 each carry the phosphoserine modification. Residues 646–668 (SSSQSGDSESDSDSCSSRTSSQS) are compositionally biased toward low complexity. A phosphothreonine mark is found at Thr-689 and Thr-706. The span at 698-711 (EQVQNGNDTPTQVE) shows a compositional bias: polar residues. The span at 733–744 (KQSRRNPARRSS) shows a compositional bias: basic residues.

It belongs to the DEAD box helicase family. DDX20 subfamily. Part of the core SMN complex that contains SMN1, GEMIN2/SIP1, DDX20/GEMIN3, GEMIN4, GEMIN5, GEMIN6, GEMIN7, GEMIN8 and STRAP/UNRIP. Part of the SMN-Sm complex that contains SMN1, GEMIN2/SIP1, DDX20/GEMIN3, GEMIN4, GEMIN5, GEMIN6, GEMIN7, GEMIN8, STRAP/UNRIP and the Sm proteins SNRPB, SNRPD1, SNRPD2, SNRPD3, SNRPE, SNRPF and SNRPG. Interacts with SMN1; the interaction is direct. Interacts with GEMIN4; the interaction is direct. Interacts with GEMIN5. Interacts with SNUPN; the interaction is direct. Interacts with PPP4R2. Interacts with FOXL2. Interacts with NANOS1 and PUM2.

Its subcellular location is the cytoplasm. The protein resides in the nucleus. It is found in the gem. It catalyses the reaction ATP + H2O = ADP + phosphate + H(+). It carries out the reaction a ribonucleoside 5'-triphosphate + H2O = a ribonucleoside 5'-diphosphate + phosphate + H(+). In terms of biological role, the SMN complex catalyzes the assembly of small nuclear ribonucleoproteins (snRNPs), the building blocks of the spliceosome, and thereby plays an important role in the splicing of cellular pre-mRNAs. Most spliceosomal snRNPs contain a common set of Sm proteins SNRPB, SNRPD1, SNRPD2, SNRPD3, SNRPE, SNRPF and SNRPG that assemble in a heptameric protein ring on the Sm site of the small nuclear RNA to form the core snRNP (Sm core). In the cytosol, the Sm proteins SNRPD1, SNRPD2, SNRPE, SNRPF and SNRPG are trapped in an inactive 6S pICln-Sm complex by the chaperone CLNS1A that controls the assembly of the core snRNP. To assemble core snRNPs, the SMN complex accepts the trapped 5Sm proteins from CLNS1A forming an intermediate. Binding of snRNA inside 5Sm triggers eviction of the SMN complex, thereby allowing binding of SNRPD3 and SNRPB to complete assembly of the core snRNP. May also play a role in the metabolism of small nucleolar ribonucleoprotein (snoRNPs). The sequence is that of Probable ATP-dependent RNA helicase DDX20 (Ddx20) from Mus musculus (Mouse).